A 132-amino-acid chain; its full sequence is Small ribosomal subunit protein uS8 (132 aa).

Belongs to the universal ribosomal protein uS8 family. Part of the 30S ribosomal subunit. Contacts proteins S5 and S12.

In terms of biological role, one of the primary rRNA binding proteins, it binds directly to 16S rRNA central domain where it helps coordinate assembly of the platform of the 30S subunit. The chain is Small ribosomal subunit protein uS8 from Anaeromyxobacter dehalogenans (strain 2CP-C).